The chain runs to 271 residues: 2-aminophenol 1,6-dioxygenase subunit alpha (271 aa).

Belongs to the LigB/MhpB extradiol dioxygenase family. The APD complex is a heterotetramer of 2 alpha (CnbCa) and 2 beta (CnbCb) subunits.

It participates in xenobiotic degradation; nitrobenzene degradation. The protein operates within xenobiotic degradation; 4-chloronitrobenzene degradation. Component of the 2-aminophenol 1,6-dioxygenase (APD) complex that catalyzes the ring fission of 2-aminophenol to produce 2-aminomuconic semialdehyde. CnbCa may have a role in the stability of the complex. The complex is also active on other substrates such as 2-amino-5-chlorophenol (68% activity), protocatechuate (33% activity) and catechol (5% activity). Both 2-aminophenol and 2-amino-5-cholorophenol are likely native substrates for this dioxygenase which is involved in the reductive degradation pathway of both nitrobenzene (NB) and 4-chloronitrobenzene (4-CNB), allowing C.testosteroni strain CNB-1 to grow on these compounds as sole source of carbon, nitrogen, and energy. The chain is 2-aminophenol 1,6-dioxygenase subunit alpha from Comamonas testosteroni (Pseudomonas testosteroni).